A 1135-amino-acid chain; its full sequence is DNA-directed RNA polymerase subunit beta' (1135 aa).

Positions 60, 62, 75, and 78 each coordinate Zn(2+). Residues D450, D452, and D454 each contribute to the Mg(2+) site. Positions 795, 869, 876, and 879 each coordinate Zn(2+).

Belongs to the RNA polymerase beta' chain family. The RNAP catalytic core consists of 2 alpha, 1 beta, 1 beta' and 1 omega subunit. When a sigma factor is associated with the core the holoenzyme is formed, which can initiate transcription. Requires Mg(2+) as cofactor. Zn(2+) is required as a cofactor.

It carries out the reaction RNA(n) + a ribonucleoside 5'-triphosphate = RNA(n+1) + diphosphate. DNA-dependent RNA polymerase catalyzes the transcription of DNA into RNA using the four ribonucleoside triphosphates as substrates. This chain is DNA-directed RNA polymerase subunit beta', found in Clostridium tetani (strain Massachusetts / E88).